Reading from the N-terminus, the 43-residue chain is Potassium channel toxin gamma-KTx 4.9 (43 aa).

Disulfide bonds link cysteine 5/cysteine 23, cysteine 11/cysteine 34, cysteine 20/cysteine 39, and cysteine 24/cysteine 41.

This sequence belongs to the ergtoxin family. Gamma-KTx 4 subfamily. In terms of tissue distribution, expressed by the venom gland.

It localises to the secreted. In terms of biological role, reversibly blocks Kv11/ERG potassium channels. This chain is Potassium channel toxin gamma-KTx 4.9, found in Centruroides sculpturatus (Arizona bark scorpion).